The primary structure comprises 417 residues: Metal-binding activator 1 (417 aa).

Residues 1–40 constitute a DNA-binding region (copper-fist); sequence MIIFNGNKYACASCIRGHRSSTCRHSHRMLIKVRTRGRPS. Residues cysteine 11, cysteine 14, cysteine 23, and histidine 25 each coordinate Zn(2+). Disordered stretches follow at residues 128-198 and 216-242; these read FLRK…IFTP and YNSS…AAPH. Phosphoserine is present on serine 143. The segment covering 153-178 has biased composition (basic and acidic residues); sequence SEKKERSRLQQEPIRHFSNCCKKDKS. 2 stretches are compositionally biased toward polar residues: residues 179 to 190 and 228 to 238; these read QNPASNGKTNKA and ETLTPQSTTTI. Tandem repeats lie at residues 264–279 and 322–337. Positions 264–337 are 2 X 16 AA repeat of C-X-C-X(4)-C-X-C-X-X-C-X-X-H; that stretch reads CSCEDESCPC…NCTCDGCFSH (74 aa).

It localises to the nucleus. Regulatory protein involved in Cu/Fe utilization and stress resistance. Involved in basal level transcription of FRE1 and H(2)O(2)-induced transcription of CTT1. Regulates the transcription of CTR1 and CTR3 via the copper ion responsive elements in their promoters. Required for degradation of CTR1. This is Metal-binding activator 1 (MAC1) from Saccharomyces cerevisiae (strain ATCC 204508 / S288c) (Baker's yeast).